The sequence spans 325 residues: MSETASWQPSAPIANLLKRAAIMAEIRRFFADRGVLEVETPTMSQATVTDIHLVPFQTRFVGPGAADGLTLYMMTSPEYHMKRLLAAGSGSIYQLGRSFRNEEAGRHHNPEFTMLEWYRPHYDMYRLMDEVEDLLQQILDCDSSERLSYQQAFLRHLDIDPLSADKAQLREAAAKLDLSNIADTEEDRDTLLQLLFTVGVEPHIGRDKPAFVYHFPASQASLAVISTEDHRVAERFEVYFKGIELANGFHELTDGDEQLKRFEQDNRSREKRGLPQHPIDMNLIDALKHGLPDCSGVALGVDRLVMLALGAEKLSDVIAFPVGRA.

76-78 (SPE) provides a ligand contact to substrate. ATP-binding positions include 100-102 (RNE) and N109. Y118 serves as a coordination point for substrate. 244 to 245 (EL) serves as a coordination point for ATP. E251 contributes to the substrate binding site. G300 provides a ligand contact to ATP.

The protein belongs to the class-II aminoacyl-tRNA synthetase family. EpmA subfamily. As to quaternary structure, homodimer.

It carries out the reaction D-beta-lysine + L-lysyl-[protein] + ATP = N(6)-((3R)-3,6-diaminohexanoyl)-L-lysyl-[protein] + AMP + diphosphate + H(+). Its function is as follows. With EpmB is involved in the beta-lysylation step of the post-translational modification of translation elongation factor P (EF-P). Catalyzes the ATP-dependent activation of (R)-beta-lysine produced by EpmB, forming a lysyl-adenylate, from which the beta-lysyl moiety is then transferred to the epsilon-amino group of a conserved specific lysine residue in EF-P. The protein is Elongation factor P--(R)-beta-lysine ligase of Yersinia enterocolitica serotype O:8 / biotype 1B (strain NCTC 13174 / 8081).